The chain runs to 160 residues: MTKKKAHKPGSATIALNKRARHEYFIEEEFEAGLALQGWEVKSLRAGKANISDSYVLLRDGEAYLFGANFTPMAVASTHVVCDPTRTRKLLLNQRELDSLYGRVNREGYTVVALSLYWKNAWCKVKIGVAKGKKQHDKRSDLKEREWQLDKARIMKNAGR.

It belongs to the SmpB family.

The protein resides in the cytoplasm. Required for rescue of stalled ribosomes mediated by trans-translation. Binds to transfer-messenger RNA (tmRNA), required for stable association of tmRNA with ribosomes. tmRNA and SmpB together mimic tRNA shape, replacing the anticodon stem-loop with SmpB. tmRNA is encoded by the ssrA gene; the 2 termini fold to resemble tRNA(Ala) and it encodes a 'tag peptide', a short internal open reading frame. During trans-translation Ala-aminoacylated tmRNA acts like a tRNA, entering the A-site of stalled ribosomes, displacing the stalled mRNA. The ribosome then switches to translate the ORF on the tmRNA; the nascent peptide is terminated with the 'tag peptide' encoded by the tmRNA and targeted for degradation. The ribosome is freed to recommence translation, which seems to be the essential function of trans-translation. The sequence is that of SsrA-binding protein from Citrobacter koseri (strain ATCC BAA-895 / CDC 4225-83 / SGSC4696).